The sequence spans 102 residues: Putative pterin-4-alpha-carbinolamine dehydratase (102 aa).

It belongs to the pterin-4-alpha-carbinolamine dehydratase family.

The catalysed reaction is (4aS,6R)-4a-hydroxy-L-erythro-5,6,7,8-tetrahydrobiopterin = (6R)-L-erythro-6,7-dihydrobiopterin + H2O. The sequence is that of Putative pterin-4-alpha-carbinolamine dehydratase from Psychromonas ingrahamii (strain DSM 17664 / CCUG 51855 / 37).